The following is a 371-amino-acid chain: uncharacterized protein (371 aa).

This is an uncharacterized protein from Rickettsia prowazekii (strain Madrid E).